A 102-amino-acid chain; its full sequence is Large ribosomal subunit protein uL24 (102 aa).

This sequence belongs to the universal ribosomal protein uL24 family. As to quaternary structure, part of the 50S ribosomal subunit.

Its function is as follows. One of two assembly initiator proteins, it binds directly to the 5'-end of the 23S rRNA, where it nucleates assembly of the 50S subunit. One of the proteins that surrounds the polypeptide exit tunnel on the outside of the subunit. The chain is Large ribosomal subunit protein uL24 from Alkaliphilus oremlandii (strain OhILAs) (Clostridium oremlandii (strain OhILAs)).